A 238-amino-acid chain; its full sequence is ATP synthase subunit a (238 aa).

A run of 5 helical transmembrane segments spans residues 18–38 (LTIL…VFWA), 75–95 (YSLL…LGLM), 112–132 (NFGV…IEGI), 179–199 (VVTG…PLAF), and 203–223 (IVWT…FIIL).

This sequence belongs to the ATPase A chain family. F-type ATPases have 2 components, CF(1) - the catalytic core - and CF(0) - the membrane proton channel. CF(1) has five subunits: alpha(3), beta(3), gamma(1), delta(1), epsilon(1). CF(0) has three main subunits: a(1), b(2) and c(9-12). The alpha and beta chains form an alternating ring which encloses part of the gamma chain. CF(1) is attached to CF(0) by a central stalk formed by the gamma and epsilon chains, while a peripheral stalk is formed by the delta and b chains.

It is found in the cell membrane. In terms of biological role, key component of the proton channel; it plays a direct role in the translocation of protons across the membrane. This is ATP synthase subunit a from Streptococcus agalactiae serotype Ia (strain ATCC 27591 / A909 / CDC SS700).